Consider the following 528-residue polypeptide: GMP synthase [glutamine-hydrolyzing] (528 aa).

One can recognise a Glutamine amidotransferase type-1 domain in the interval 13–204 (AIVILDFGSQ…VYDICSCEPD (192 aa)). C90 functions as the Nucleophile in the catalytic mechanism. Active-site residues include H178 and E180. A GMPS ATP-PPase domain is found at 205 to 403 (WTTNLFIDEA…LGLPDEIVRR (199 aa)). 232–238 (SGGVDSS) lines the ATP pocket.

Homodimer.

It catalyses the reaction XMP + L-glutamine + ATP + H2O = GMP + L-glutamate + AMP + diphosphate + 2 H(+). The protein operates within purine metabolism; GMP biosynthesis; GMP from XMP (L-Gln route): step 1/1. Its function is as follows. Catalyzes the synthesis of GMP from XMP. This chain is GMP synthase [glutamine-hydrolyzing], found in Prochlorococcus marinus (strain NATL1A).